The sequence spans 197 residues: TGEKSISCSECGKCFIKSSELTVHQMTHIGEKTYSCSECGKCFASLSHLRVHQKIHTGEKPFSCSECGKCFLNRGSLVRHHRTHTGEKPFFCSECGKRFAASSDLRVHRRTHTGEKPFSCSECEKRFLNPWSLVRHYRTHTGEKPFSCSECGKCFARSSDLTVHRRRSHTKEKPFSCSECGKCFTSSSELTVHLRTH.

7 consecutive C2H2-type zinc fingers follow at residues 6–28, 34–56, 62–84, 90–112, 118–140, 146–169, and 175–197; these read ISCS…QMTH, YSCS…QKIH, FSCS…HRTH, FFCS…RRTH, FSCS…YRTH, FSCS…RRSH, and FSCS…LRTH.

This sequence belongs to the krueppel C2H2-type zinc-finger protein family.

The protein localises to the nucleus. In terms of biological role, may be involved in transcriptional regulation. This is Gastrula zinc finger protein XlCGF17.1 from Xenopus laevis (African clawed frog).